The following is a 525-amino-acid chain: MLLPKELKYAAIAGGVAVFGLIFGWVLFPVILKGQLKKEMALSKKTDVRKMWEQIPFALEFKVYLFNYTNAEEVQKGAKPILKEIGPYHFDEWKEKVEIEDHEEDDTITYKRRDAFYFNPEMSAPGLTGEEIVVIPHIFMLGMALTVHRDKPAMLNMVGKAMNGIFDSPPDIFMRVKALDILFRGIIINCARTEFAPKATCTALKKEGVSGLVLEPNNQFRFSVFGTRNNTIDPHVITVKRGIKNVMDVGQVVAVDGKTEQTIWRDACNEYQGTDGTVFPPFLTENDRIQSFSTDLCRSFKPWYQKKTSYRGIKTNRYIANIGNFSEDPELHCFCPDPDKCPPKGLMDLAPCIKAPMYASMPHFLDSDPALLNNVKGLNPDINQHGIEIDFEPISGTPMVAKQRIQFNLQLLKTEKIDLFKDLSGDIVPLFWIDEGLALNKTFVNMLKHQLFIPKRVVGVLRWWMVSFGSLGADIGIVYHFRDHIMRLAVSGDTKVSKVTPEEDPEQKDISVIGPPAQEPAKINI.

At Met1–Ala11 the chain is on the cytoplasmic side. A helical transmembrane segment spans residues Ile12–Leu32. Residues Lys33–Arg456 lie on the Extracellular side of the membrane. N-linked (GlcNAc...) asparagine glycosylation is found at Asn67, Asn229, and Asn324. 3 cysteine pairs are disulfide-bonded: Cys268/Cys333, Cys297/Cys352, and Cys335/Cys341. N-linked (GlcNAc...) asparagine glycosylation is present at Asn440. A helical transmembrane segment spans residues Val457 to Ile477. Topologically, residues Val478 to Ile525 are cytoplasmic. Residues Ser497–Ile525 are disordered.

The protein belongs to the CD36 family.

It localises to the cell membrane. Its function is as follows. Plays an olfactory role that is not restricted to pheromone sensitivity. The chain is Sensory neuron membrane protein 1 from Mamestra brassicae (Cabbage moth).